A 142-amino-acid polypeptide reads, in one-letter code: UPF0102 protein Bcen2424_0290 (142 aa).

A compositionally biased stretch (low complexity) spans 1–19 (MCHAAPARPEGARGRPPSG). The disordered stretch occupies residues 1 to 27 (MCHAAPARPEGARGRPPSGDNFSGAAR).

The protein belongs to the UPF0102 family.

This Burkholderia cenocepacia (strain HI2424) protein is UPF0102 protein Bcen2424_0290.